We begin with the raw amino-acid sequence, 610 residues long: MTIKFLSESTINRIAAGEVIERPASVVKELVENAVDASSTKIDIILERAGKNLIIISDDGIGMTDKELEIAVERHTTSKFDESDFLNINTFGFRGEALPSIAAISKMLITSKKRDADKAFQIKLIGGNEKQVTISVHNEGTKIEIRDLFFATPARLKFLRADKTELAATVGVVKKIALAHPKISFSLTHDGKNLLKLKGQNKDAETNLKQRIIDVIGDDFIKNAAYIDFKTPDFSICGYTSSPTYNRASSEDQFLFINNRPVKDKLLQIALRVAYQDYLARDRYPICAIFLQINPQLVDVNVHPAKAEVRFHDPDYVRNLLIEAIKNALTNKSHVTSTTIASDALELFKNPLVNKQSPVSKVINVNSKSADYRPTTHSILNTVPQNHVCQKLIDTLSHAKIEQEVENRIEHEQQIRKQYKLGAAKAQLHTTYIISQTEDSIVITDQHAAHKRLGYEKIKDYLKTEELIKQRLLIPEIVELPNEKKADCLYDHREKLYKLGLTLEKFGEKSIIVTEIPNILGDVNVQKLIQDLADHLSDFGKNIALTELIEHVTETYACHYSIRAGRKLSADEMNALLRQMENTLLSGQCNHGRPTYIELKLKDIERLFGR.

This sequence belongs to the DNA mismatch repair MutL/HexB family.

Its function is as follows. This protein is involved in the repair of mismatches in DNA. It is required for dam-dependent methyl-directed DNA mismatch repair. May act as a 'molecular matchmaker', a protein that promotes the formation of a stable complex between two or more DNA-binding proteins in an ATP-dependent manner without itself being part of a final effector complex. The sequence is that of DNA mismatch repair protein MutL from Rickettsia rickettsii (strain Iowa).